We begin with the raw amino-acid sequence, 444 residues long: Citrate-proton symporter (444 aa).

Over 1-41 (MPTARCSMRASSTAPVRMMATAGGARIGAILRVTSGNFLEQ) the chain is Cytoplasmic. Residues 42–62 (FDFFLFGFYATYIAHTFFPAS) form a helical membrane-spanning segment. Topologically, residues 63 to 72 (SEFASLMMTF) are periplasmic. The chain crosses the membrane as a helical span at residues 73-93 (AVFGAGFLMRPIGAIVLGAYI). At 94-114 (DKVGRRKGLIVTLSIMATGTF) the chain is on the cytoplasmic side. A helical transmembrane segment spans residues 115 to 135 (LIVLIPSYQTIGLWAPLLVLI). Over 136 to 137 (GR) the chain is Periplasmic. The helical transmembrane segment at 138–158 (LLQGFSAGAELGGVSVYLAEI) threads the bilayer. Residues 159 to 177 (ATPGRKGFYTSWQSGSQQV) are Cytoplasmic-facing. Residues 178–198 (AIMVAAAMGFALNAVLEPSAI) traverse the membrane as a helical segment. Position 199 (Ser199) is a topological domain, periplasmic. A helical membrane pass occupies residues 200-220 (DWGWRIPFLFGVLIVPFIFIL). The Cytoplasmic portion of the chain corresponds to 221–251 (RRKLEETQEFTARRHHLAMRQVFATLLANWQ). The chain crosses the membrane as a helical span at residues 252 to 272 (VVIAGMMMVAMTTTAFYLITV). Residues 273–289 (YAPTFGKKVLMLSASDS) lie on the Periplasmic side of the membrane. A helical membrane pass occupies residues 290–310 (LLVTLLVAISNFFWLPVGGAL). At 311–318 (SDRFGRRS) the chain is on the cytoplasmic side. A helical transmembrane segment spans residues 319–339 (VLIAMTLLALATAWPALTMLA). A topological domain (periplasmic) is located at residue Asn340. The chain crosses the membrane as a helical span at residues 341-361 (APSFLMMLSVLLWLSFIYGMY). Residues 362 to 379 (NGAMIPALTEIMPAEVRV) are Cytoplasmic-facing. Residues 380–400 (AGFSLAYSLATAVFGGFTPVI) form a helical membrane-spanning segment. At 401-411 (STALIEYTGDK) the chain is on the periplasmic side. Residues 412 to 432 (ASPGYWMSFAAICGLLATCYL) form a helical membrane-spanning segment. The Cytoplasmic segment spans residues 433–444 (YRRSAVALQTAR).

The protein belongs to the major facilitator superfamily. Metabolite:H+ Symporter (MHS) family (TC 2.A.1.6) family.

Its subcellular location is the cell inner membrane. Its function is as follows. Uptake of citrate across the boundary membrane with the concomitant transport of protons into the cell (symport system). The sequence is that of Citrate-proton symporter (citH) from Klebsiella pneumoniae.